The sequence spans 167 residues: 2-C-methyl-D-erythritol 2,4-cyclodiphosphate synthase (167 aa).

A divalent metal cation is bound by residues Asp-15 and His-17. Residues Asp-15–His-17 and His-43–Ser-44 each bind 4-CDP-2-C-methyl-D-erythritol 2-phosphate. Position 51 (His-51) interacts with a divalent metal cation. 4-CDP-2-C-methyl-D-erythritol 2-phosphate is bound by residues Asp-65–Gly-67, Thr-141–Glu-144, and Arg-151.

It belongs to the IspF family. Homotrimer. The cofactor is a divalent metal cation.

It catalyses the reaction 4-CDP-2-C-methyl-D-erythritol 2-phosphate = 2-C-methyl-D-erythritol 2,4-cyclic diphosphate + CMP. Its pathway is isoprenoid biosynthesis; isopentenyl diphosphate biosynthesis via DXP pathway; isopentenyl diphosphate from 1-deoxy-D-xylulose 5-phosphate: step 4/6. Functionally, involved in the biosynthesis of isopentenyl diphosphate (IPP) and dimethylallyl diphosphate (DMAPP), two major building blocks of isoprenoid compounds. Catalyzes the conversion of 4-diphosphocytidyl-2-C-methyl-D-erythritol 2-phosphate (CDP-ME2P) to 2-C-methyl-D-erythritol 2,4-cyclodiphosphate (ME-CPP) with a corresponding release of cytidine 5-monophosphate (CMP). This is 2-C-methyl-D-erythritol 2,4-cyclodiphosphate synthase from Prochlorococcus marinus (strain MIT 9312).